A 404-amino-acid chain; its full sequence is Subtilisin-like proteinase Mp1 (404 aa).

A signal peptide spans 1-19 (MVGFKTLALHLAAVLPALA). A propeptide spanning residues 20-112 (APVDKQATQV…VEPDQVWDLY (93 aa)) is cleaved from the precursor. One can recognise an Inhibitor I9 domain in the interval 33 to 111 (SYIITLKQGA…FVEPDQVWDL (79 aa)). The Peptidase S8 domain maps to 121-404 (PWGLGSISHR…NLIAFNGVTA (284 aa)). Residue asparagine 133 is glycosylated (N-linked (GlcNAc...) asparagine). Residues aspartate 154, histidine 186, and serine 347 each act as charge relay system in the active site.

Belongs to the peptidase S8 family.

It localises to the secreted. This Magnaporthiopsis poae (Kentucky bluegrass fungus) protein is Subtilisin-like proteinase Mp1.